Here is a 194-residue protein sequence, read N- to C-terminus: Small ribosomal subunit protein uS7 (194 aa).

The protein belongs to the universal ribosomal protein uS7 family. In terms of assembly, part of the 30S ribosomal subunit.

Functionally, one of the primary rRNA binding proteins, it binds directly to 16S rRNA where it nucleates assembly of the head domain of the 30S subunit. Is located at the subunit interface close to the decoding center. This chain is Small ribosomal subunit protein uS7, found in Methanospirillum hungatei JF-1 (strain ATCC 27890 / DSM 864 / NBRC 100397 / JF-1).